The primary structure comprises 322 residues: MTSPSTIKQKFIAKGHQLGVVAVGFSDGQPNQGVDPSGLIEAGLLDQLRDDLEYDIRHDGQVHTYAEFVPEHDPNHRGMKKPRTVSAATQQLSRQVYEHAREGRLVLTLGGDHSIAIGTISGTAKAIRERLGREMAVIWVDAHADINRPEDSDSGNIHGMPLAFLTGLAKDDNEDMFGWLQPDNLISPRKLVYIGLRDVDRAEKRLLREHGIKAFSMHDIDKYGIGRVVEMALAHIGQDTPIHLSFDVDALDPQWAPSTGTPVRGGLTLREGDFIAESIHETGSLVAMDLVEVNPTLETLGASETIRAGCSLVRSALGDTLL.

Mn(2+)-binding residues include His113, Asp141, His143, and Asp145. Residues 143 to 147 (HADIN), 154 to 156 (SGN), and Asp200 each bind substrate. Positions 247 and 249 each coordinate Mn(2+). Thr261 and Glu292 together coordinate substrate.

Belongs to the arginase family. In terms of assembly, homotrimer. Mn(2+) is required as a cofactor.

The enzyme catalyses L-arginine + H2O = urea + L-ornithine. Its pathway is nitrogen metabolism; urea cycle; L-ornithine and urea from L-arginine: step 1/1. The polypeptide is Arginase (ARG) (Coccidioides posadasii (strain C735) (Valley fever fungus)).